We begin with the raw amino-acid sequence, 407 residues long: Large ribosomal subunit protein uL3-like (407 aa).

Residues 1–31 (MSHRKFSAPRHGHLGFLPHKRSHRHRGKVKT) are compositionally biased toward basic residues. 2 disordered regions span residues 1–35 (MSHR…WPRD) and 383–407 (QEKR…SGDL). Basic and acidic residues predominate over residues 394–407 (KHLEKEKPETSGDL).

The protein belongs to the universal ribosomal protein uL3 family. Component of the large ribosomal subunit in striated muscle cells.

Its function is as follows. Heart- and skeletal muscle-specific component of the ribosome, which regulates muscle function. Component of the large ribosomal subunit in striated muscle cells: replaces the RPL3 paralog in the ribosome in these cells. The ribosome is a large ribonucleoprotein complex responsible for the synthesis of proteins in the cell. Inhibits myotube growth and muscle function. This is Large ribosomal subunit protein uL3-like (RPL3L) from Bos taurus (Bovine).